The chain runs to 132 residues: MVLTDPIADYLTRIRNANMVRHESLVVPASKMKKDISEILKREGFIRDYEVIDDDKQGVIRIFLKYGKNNERVISGLKRISKPGLRSYVKSDAVPKVLNGLGIAIISTSEGVITDKEARAKNVGGEVLAYVW.

Belongs to the universal ribosomal protein uS8 family. As to quaternary structure, part of the 30S ribosomal subunit. Contacts proteins S5 and S12.

One of the primary rRNA binding proteins, it binds directly to 16S rRNA central domain where it helps coordinate assembly of the platform of the 30S subunit. The polypeptide is Small ribosomal subunit protein uS8 (Lacticaseibacillus casei (strain BL23) (Lactobacillus casei)).